The primary structure comprises 118 residues: Small ribosomal subunit protein mS41 (118 aa).

The transit peptide at 1 to 24 (MLRVVAKAQYPAAVRCFSTSHAAF) directs the protein to the mitochondrion.

It belongs to the mitochondrion-specific ribosomal protein mS41 family.

The protein resides in the mitochondrion. Its function is as follows. Involved in telomere length regulation. The sequence is that of Small ribosomal subunit protein mS41 (FYV4) from Yarrowia lipolytica (strain CLIB 122 / E 150) (Yeast).